The sequence spans 106 residues: MSEETTVRPERTERSERPERPQYRGNGPRKRRPFQRRKVCRFCADKDLVIDYKDPRVLRSFITERGKIVPRRISGNCSKHQREITEAIKRARNIALIPIASTHVVA.

Positions 1 to 22 are enriched in basic and acidic residues; it reads MSEETTVRPERTERSERPERPQ. Residues 1 to 34 form a disordered region; that stretch reads MSEETTVRPERTERSERPERPQYRGNGPRKRRPF.

It belongs to the bacterial ribosomal protein bS18 family. Part of the 30S ribosomal subunit. Forms a tight heterodimer with protein bS6.

Functionally, binds as a heterodimer with protein bS6 to the central domain of the 16S rRNA, where it helps stabilize the platform of the 30S subunit. The sequence is that of Small ribosomal subunit protein bS18 from Geobacter metallireducens (strain ATCC 53774 / DSM 7210 / GS-15).